The following is a 428-amino-acid chain: S-adenosylmethionine synthase (428 aa).

ATP is bound at residue His14. Asp16 provides a ligand contact to Mg(2+). Glu42 contacts K(+). Residues Glu55 and Gln98 each coordinate L-methionine. Residues 98–108 are flexible loop; it reads QSGDINRGVER. ATP is bound by residues 165 to 167, 251 to 252, Asp260, 266 to 267, Ala283, and Lys287; these read DAK, KF, and RK. Asp260 lines the L-methionine pocket. Lys291 is a binding site for L-methionine.

This sequence belongs to the AdoMet synthase family. As to quaternary structure, homotetramer; dimer of dimers. It depends on Mg(2+) as a cofactor. K(+) is required as a cofactor.

Its subcellular location is the cytoplasm. The enzyme catalyses L-methionine + ATP + H2O = S-adenosyl-L-methionine + phosphate + diphosphate. The protein operates within amino-acid biosynthesis; S-adenosyl-L-methionine biosynthesis; S-adenosyl-L-methionine from L-methionine: step 1/1. Catalyzes the formation of S-adenosylmethionine (AdoMet) from methionine and ATP. The overall synthetic reaction is composed of two sequential steps, AdoMet formation and the subsequent tripolyphosphate hydrolysis which occurs prior to release of AdoMet from the enzyme. This Parabacteroides distasonis (strain ATCC 8503 / DSM 20701 / CIP 104284 / JCM 5825 / NCTC 11152) protein is S-adenosylmethionine synthase.